Here is a 312-residue protein sequence, read N- to C-terminus: Holliday junction branch migration complex subunit RuvB (312 aa).

The large ATPase domain (RuvB-L) stretch occupies residues 1–168; it reads MKTNYEFRPQ…FGHIFHLNEY (168 aa). ATP contacts are provided by residues Arg8, Gly49, Lys52, Thr53, Thr54, 115–117, Arg158, Tyr168, and Arg206; that span reads EDF. Thr53 serves as a coordination point for Mg(2+). Positions 169–234 are small ATPAse domain (RuvB-S); sequence EPSEISAIIL…DIKNIFKKIQ (66 aa). Residues 237–312 are head domain (RuvB-H); the sequence is EFGLDEQDIN…DFLKNNQLIK (76 aa). DNA contacts are provided by Lys290 and Arg295.

This sequence belongs to the RuvB family. Homohexamer. Forms an RuvA(8)-RuvB(12)-Holliday junction (HJ) complex. HJ DNA is sandwiched between 2 RuvA tetramers; dsDNA enters through RuvA and exits via RuvB. An RuvB hexamer assembles on each DNA strand where it exits the tetramer. Each RuvB hexamer is contacted by two RuvA subunits (via domain III) on 2 adjacent RuvB subunits; this complex drives branch migration. In the full resolvosome a probable DNA-RuvA(4)-RuvB(12)-RuvC(2) complex forms which resolves the HJ.

Its subcellular location is the cytoplasm. It carries out the reaction ATP + H2O = ADP + phosphate + H(+). Functionally, the RuvA-RuvB-RuvC complex processes Holliday junction (HJ) DNA during genetic recombination and DNA repair, while the RuvA-RuvB complex plays an important role in the rescue of blocked DNA replication forks via replication fork reversal (RFR). RuvA specifically binds to HJ cruciform DNA, conferring on it an open structure. The RuvB hexamer acts as an ATP-dependent pump, pulling dsDNA into and through the RuvAB complex. RuvB forms 2 homohexamers on either side of HJ DNA bound by 1 or 2 RuvA tetramers; 4 subunits per hexamer contact DNA at a time. Coordinated motions by a converter formed by DNA-disengaged RuvB subunits stimulates ATP hydrolysis and nucleotide exchange. Immobilization of the converter enables RuvB to convert the ATP-contained energy into a lever motion, pulling 2 nucleotides of DNA out of the RuvA tetramer per ATP hydrolyzed, thus driving DNA branch migration. The RuvB motors rotate together with the DNA substrate, which together with the progressing nucleotide cycle form the mechanistic basis for DNA recombination by continuous HJ branch migration. Branch migration allows RuvC to scan DNA until it finds its consensus sequence, where it cleaves and resolves cruciform DNA. This chain is Holliday junction branch migration complex subunit RuvB, found in Ureaplasma parvum serovar 3 (strain ATCC 27815 / 27 / NCTC 11736).